The following is a 577-amino-acid chain: Laccase-17 (577 aa).

The N-terminal stretch at 1 to 22 (MALQLLLAVFSCVLLLPQPAFG) is a signal peptide. Plastocyanin-like domains are found at residues 30-146 (EIKM…PKRG) and 156-309 (KEVP…YEPP). N-linked (GlcNAc...) asparagine glycosylation is found at Asn-35 and Asn-76. Residues His-80 and His-82 each contribute to the Cu cation site. N-linked (GlcNAc...) asparagine glycosylation is present at Asn-112. Residues His-125 and His-127 each contribute to the Cu cation site. N-linked (GlcNAc...) asparagine glycosylation is found at Asn-185, Asn-201, Asn-237, Asn-297, Asn-335, Asn-383, Asn-391, Asn-401, Asn-437, Asn-444, Asn-450, and Asn-460. The 135-residue stretch at 427–561 (KFPWSPIVPF…RMAWLVLDGD (135 aa)) folds into the Plastocyanin-like 3 domain. Residues His-478, His-481, His-483, His-540, Cys-541, His-542, and His-546 each coordinate Cu cation.

It belongs to the multicopper oxidase family. Cu cation serves as cofactor. In terms of tissue distribution, ubiquitous with higher levels in the inflorescence stem.

Its subcellular location is the secreted. It localises to the extracellular space. It is found in the apoplast. The enzyme catalyses 4 hydroquinone + O2 = 4 benzosemiquinone + 2 H2O. Functionally, lignin degradation and detoxification of lignin-derived products. The sequence is that of Laccase-17 (LAC17) from Arabidopsis thaliana (Mouse-ear cress).